The chain runs to 432 residues: UDP-N-acetylglucosamine 1-carboxyvinyltransferase (432 aa).

A phosphoenolpyruvate-binding site is contributed by 22 to 23 (KN). Arg102 serves as a coordination point for UDP-N-acetyl-alpha-D-glucosamine. Cys126 serves as the catalytic Proton donor. 2-(S-cysteinyl)pyruvic acid O-phosphothioketal is present on Cys126. UDP-N-acetyl-alpha-D-glucosamine-binding positions include 131–135 (RPVDL), Asp317, and Ile339.

The protein belongs to the EPSP synthase family. MurA subfamily.

The protein resides in the cytoplasm. The catalysed reaction is phosphoenolpyruvate + UDP-N-acetyl-alpha-D-glucosamine = UDP-N-acetyl-3-O-(1-carboxyvinyl)-alpha-D-glucosamine + phosphate. It functions in the pathway cell wall biogenesis; peptidoglycan biosynthesis. Functionally, cell wall formation. Adds enolpyruvyl to UDP-N-acetylglucosamine. The polypeptide is UDP-N-acetylglucosamine 1-carboxyvinyltransferase (Rhodospirillum centenum (strain ATCC 51521 / SW)).